The primary structure comprises 680 residues: MADPHERAAELRHLLNRAGHAYYVLDAPEMEDTVYDRLYRELLELEQNDPGLQRPDSPTQRVGGAPAEGFTSVEHRVGMLSLDNAFNRDDLRAWHERLLKVLDRPSDSRLPLVGELKIDGNALALSYRNGVLERAATRGDGSRGEEITANVRTISSIPLRLQIENPPEWVEVRGEAFIPDATFAAINAEREQRDEALFANPRNACAGTLRQLDPKVVAARRLDFFAYTLHLPGDAQPPGQWAALEWLNSAGFRVNPNRELCGDLAAIQRFCDHWEQGRHDLPYATDGVVVKLDDLQLQDEAGFTQKAPRWAVALKYPAEEAPTRLLRVGAQVGRTGAITPVAEFEAVPLAGTSVSRATLHNADRIAELDLHLGDTIVVRKAGEIIPEVVRVLPELRPSDATPVQLPQQCPECGSNLVREGDEAATRCVNSSCPAILRGGLRHWVSKGALDVDGLGSKLIEQLVDRGLVGSLADLYRLDAALLASLDRMGDKSATNLVEALKASKQQPWHRQLYGLGIRHIGEVNAKALAAAFFSIDSLATAALEAPEQIAELHGIGPEISASLGQWLHTPANQQLLQDLRSVGFSLEASTSEQEAASQAGADADGVLQGKTLVLTGTLPNLSRSEAKALIETAGGKVSGSVSKKTDYLVAGEAAGSKLTKAESLGVTVLSEADLTALLQP.

32 to 36 provides a ligand contact to NAD(+); that stretch reads DTVYD. Residues 47-66 are disordered; the sequence is QNDPGLQRPDSPTQRVGGAP. Residues 81-82 and E115 contribute to the NAD(+) site; that span reads SL. Catalysis depends on K117, which acts as the N6-AMP-lysine intermediate. NAD(+) contacts are provided by R138, E175, K291, and K315. The Zn(2+) site is built by C409, C412, C427, and C432. The region spanning 602–680 is the BRCT domain; it reads DADGVLQGKT…EADLTALLQP (79 aa).

It belongs to the NAD-dependent DNA ligase family. LigA subfamily. The cofactor is Mg(2+). Requires Mn(2+) as cofactor.

It catalyses the reaction NAD(+) + (deoxyribonucleotide)n-3'-hydroxyl + 5'-phospho-(deoxyribonucleotide)m = (deoxyribonucleotide)n+m + AMP + beta-nicotinamide D-nucleotide.. Its function is as follows. DNA ligase that catalyzes the formation of phosphodiester linkages between 5'-phosphoryl and 3'-hydroxyl groups in double-stranded DNA using NAD as a coenzyme and as the energy source for the reaction. It is essential for DNA replication and repair of damaged DNA. The protein is DNA ligase of Synechococcus sp. (strain CC9605).